A 1028-amino-acid chain; its full sequence is Pentatricopeptide repeat-containing protein At3g09040, mitochondrial (1028 aa).

A mitochondrion-targeting transit peptide spans 1-30 (MYFRVLLTPSSAMFDSFSFVRRLSYSPDLG). PPR repeat units lie at residues 94–123 (EGRLGNAIVDLYAKCAQVSYAEKQFDFLEK), 124–158 (DVTAWNSMLSMYSSIGKPGKVLRSFVSLFENQIFP), 159–193 (NKFTFSIVLSTCARETNVEFGRQIHCSMIKMGLER), 194–224 (NSYCGGALVDMYAKCDRISDARRVFEWIVDP), 225–259 (NTVCWTCLFSGYVKAGLPEEAVLVFERMRDEGHRP), 260–290 (DHLAFVTVINTYIRLGKLKDARLLFGEMSSP), 291–325 (DVVAWNVMISGHGKRGCETVAIEYFFNMRKSSVKS), 326–360 (TRSTLGSVLSAIGIVANLDLGLVVHAEAIKLGLAS), 361–391 (NIYVGSSLVSMYSKCEKMEAAAKVFEALEEK), 392–426 (NDVFWNAMIRGYAHNGESHKVMELFMDMKSSGYNI), 427–461 (DDFTFTSLLSTCAASHDLEMGSQFHSIIIKKKLAK), 462–492 (NLFVGNALVDMYAKCGALEDARQIFERMCDR), 493–527 (DNVTWNTIIGSYVQDENESEAFDLFKRMNLCGIVS), 528–562 (DGACLASTLKACTHVHGLYQGKQVHCLSVKCGLDR), 563–593 (DLHTGSSLIDMYSKCGIIKDARKVFSSLPEW), 594–627 (SVVSMNALIAGYSQNNLEEAVVLFQEMLTRGVNP), 628–662 (SEITFATIVEACHKPESLTLGTQFHGQITKRGFSS), 664–694 (GEYLGISLLGMYMNSRGMTEACALFSELSSP), 696–730 (SIVLWTGMMSGHSQNGFYEEALKFYKEMRHDGVLP), 731–765 (DQATFVTVLRVCSVLSSLREGRAIHSLIFHLAHDL), 766–796 (DELTSNTLIDMYAKCGDMKGSSQVFDEMRRR), 798–832 (NVVSWNSLINGYAKNGYAEDALKIFDSMRQSHIMP), 833–863 (DEITFLGVLTACSHAGKVSDGRKIFEMMIGQ), and 869–899 (RVDHVACMVDLLGRWGYLQEADDFIEAQNLK). The type E motif stretch occupies residues 904 to 979 (LWSSLLGACR…VPGYSWIDVE (76 aa)). The tract at residues 980–1010 (QRTHIFAAGDKSHSEIGKIEMFLEDLYDLMK) is type E(+) motif.

This sequence belongs to the PPR family. PCMP-E subfamily.

The protein localises to the mitochondrion. The protein is Pentatricopeptide repeat-containing protein At3g09040, mitochondrial (PCMP-E88) of Arabidopsis thaliana (Mouse-ear cress).